Here is a 715-residue protein sequence, read N- to C-terminus: Fatty acid oxidation complex subunit alpha (715 aa).

Residues 1-189 (MIYQGETLTV…KVGAIDAVVA (189 aa)) form an enoyl-CoA hydratase/isomerase region. Aspartate 296 provides a ligand contact to substrate. The 3-hydroxyacyl-CoA dehydrogenase stretch occupies residues 311–715 (AKATSHAAVL…EMAAQGKTFY (405 aa)). Residues methionine 325, aspartate 344, 401–403 (VVE), lysine 408, and serine 430 contribute to the NAD(+) site. Histidine 451 acts as the For 3-hydroxyacyl-CoA dehydrogenase activity in catalysis. Asparagine 454 contributes to the NAD(+) binding site. Residues asparagine 501 and tyrosine 661 each coordinate substrate.

It in the N-terminal section; belongs to the enoyl-CoA hydratase/isomerase family. The protein in the C-terminal section; belongs to the 3-hydroxyacyl-CoA dehydrogenase family. As to quaternary structure, heterotetramer of two alpha chains (FadB) and two beta chains (FadA).

It catalyses the reaction a (3S)-3-hydroxyacyl-CoA + NAD(+) = a 3-oxoacyl-CoA + NADH + H(+). It carries out the reaction a (3S)-3-hydroxyacyl-CoA = a (2E)-enoyl-CoA + H2O. The enzyme catalyses a 4-saturated-(3S)-3-hydroxyacyl-CoA = a (3E)-enoyl-CoA + H2O. The catalysed reaction is (3S)-3-hydroxybutanoyl-CoA = (3R)-3-hydroxybutanoyl-CoA. It catalyses the reaction a (3Z)-enoyl-CoA = a 4-saturated (2E)-enoyl-CoA. It carries out the reaction a (3E)-enoyl-CoA = a 4-saturated (2E)-enoyl-CoA. It functions in the pathway lipid metabolism; fatty acid beta-oxidation. In terms of biological role, involved in the aerobic and anaerobic degradation of long-chain fatty acids via beta-oxidation cycle. Catalyzes the formation of 3-oxoacyl-CoA from enoyl-CoA via L-3-hydroxyacyl-CoA. It can also use D-3-hydroxyacyl-CoA and cis-3-enoyl-CoA as substrate. The sequence is that of Fatty acid oxidation complex subunit alpha from Aeromonas hydrophila subsp. hydrophila (strain ATCC 7966 / DSM 30187 / BCRC 13018 / CCUG 14551 / JCM 1027 / KCTC 2358 / NCIMB 9240 / NCTC 8049).